The chain runs to 752 residues: MRISPPEREAKKVKIVIDKDPVSTSFDKWAVPGHFSRTLAKGPKTTTWIWNLHADVHDFDSYTSDLEDVSRKIFSAHFGHLAVVFIWLSGAYFHGARFSNYEAWLSNPTTIKPSAQVVWPIVGQEILNGDVGGGFQGIQITSGLFQMWRASGITTELQLYVTAIGALVMAALMLFAGWFHYHKAAPKLEWFQNAESMMNHHLAGLFGLGSLSWAGHQIHVSLPVNKLLDSGVSPQEIPLPHEFILNKDLIAQLYPSFGQGLTPFFTLNWNEYSDFLTFKGGLNPVTGGLWLSDRAHHHLAIAVLFIVAGHMYRTNWGIGHSMKEMLETHKGPFTGEGHKGLYEIFTNSWHAQLSLNLALFGSLSIIVAHHMYSMPPYPYLATDYATSLCLFTHHVWIGGFLIVGAGAHAAIFMVRDYDPAQNYNNLLDRVLRHRDAIISHLNWVCIFLGFHSFGLYIHNDTMRALGRPQDMFSDAAIQLQPVFAQWVQGVNSAAAGNTAPNALRNASYAFGGDIVSVGEKVAMMPISLGTADFLVHHIHAFTIHVTVLILLKGVLFARNSRLIPDKANLGFRFPCDGPGRGGTCQVSAWDHVFLGLFWMYNSLSVVLFHFSWKMQSDVWGNVTADGAVSHITGNNFAQSSITINGWLRDFLWAQASQVIQSYGSALSAYGLMFLGAHFIWAFSLMFLFSGRGYWQELIESIVWAHNKLKFAPSIQPRALSITQGRAVGVAHYLLGGIATTWSFFHARIISVG.

8 consecutive transmembrane segments (helical) span residues 73–96 (IFSA…FHGA), 159–182 (LYVT…FHYH), 198–222 (MNHH…HVSL), 294–312 (RAHH…GHMY), 349–372 (WHAQ…HHMY), 388–414 (LCLF…IFMV), 436–458 (AIIS…LYIH), and 533–551 (FLVH…LILL). [4Fe-4S] cluster-binding residues include Cys-575 and Cys-584. 2 helical membrane-spanning segments follow: residues 591-612 (HVFL…HFSW) and 666-688 (LSAY…MFLF). His-677 serves as a coordination point for chlorophyll a'. Met-685 and Tyr-693 together coordinate chlorophyll a. Trp-694 is a phylloquinone binding site. Residues 726–746 (AVGVAHYLLGGIATTWSFFHA) form a helical membrane-spanning segment.

This sequence belongs to the PsaA/PsaB family. The PsaA/B heterodimer binds the P700 chlorophyll special pair and subsequent electron acceptors. PSI consists of a core antenna complex that captures photons, and an electron transfer chain that converts photonic excitation into a charge separation. The eukaryotic PSI reaction center is composed of at least 11 subunits. P700 is a chlorophyll a/chlorophyll a' dimer, A0 is one or more chlorophyll a, A1 is one or both phylloquinones and FX is a shared 4Fe-4S iron-sulfur center. is required as a cofactor.

It is found in the plastid. The protein resides in the cyanelle thylakoid membrane. The catalysed reaction is reduced [plastocyanin] + hnu + oxidized [2Fe-2S]-[ferredoxin] = oxidized [plastocyanin] + reduced [2Fe-2S]-[ferredoxin]. In terms of biological role, psaA and PsaB bind P700, the primary electron donor of photosystem I (PSI), as well as the electron acceptors A0, A1 and FX. PSI is a cytochrome c6-ferredoxin oxidoreductase, converting photonic excitation into a charge separation, which transfers an electron from the donor P700 chlorophyll pair to the spectroscopically characterized acceptors A0, A1, FX, FA and FB in turn. Oxidized P700 is reduced on the lumenal side of the thylakoid membrane by cytochrome c6. This chain is Photosystem I P700 chlorophyll a apoprotein A1, found in Cyanophora paradoxa.